A 755-amino-acid polypeptide reads, in one-letter code: uncharacterized protein (755 aa).

The next 9 membrane-spanning stretches (helical) occupy residues 46–66 (LGLG…GGLY), 70–90 (LKTI…GTIV), 93–113 (GWGL…YLAV), 118–138 (GAMV…NVST), 143–163 (FTSL…IWPF), 411–431 (IAHL…IFVL), 446–466 (LLGT…IQDP), 482–502 (ALLR…ALIL), and 514–534 (ALLS…GLAF).

Belongs to the YccS/YhfK family.

The protein resides in the cell membrane. This is an uncharacterized protein from Synechocystis sp. (strain ATCC 27184 / PCC 6803 / Kazusa).